Consider the following 323-residue polypeptide: MQAAWLLGALVVPQLLGFGHGARGAEREWEGGWGGAQEEEREREALMLKHLQEALGLPAGRGDENPAGTVEGKEDWEMEEDQGEEEEEEATPTPSSGPSPSPTPEDIVTYILGRLAGLDAGLHQLHVRLHALDTRVVELTQGLRQLRNAAGDTRDAVQALQEAQGRAEREHGRLEGCLKGLRLGHKCFLLSRDFEAQAAAQARCTARGGSLAQPADRQQMEALTRYLRAALAPYNWPVWLGVHDRRAEGLYLFENGQRVSFFAWHRSPRPELGAQPSASPHPLSPDQPNGGTLENCVAQASDDGSWWDHDCQRRLYYVCEFPF.

A signal peptide spans 1–21 (MQAAWLLGALVVPQLLGFGHG). Disordered regions lie at residues 55 to 106 (LGLP…TPED) and 272 to 295 (LGAQPSASPHPLSPDQPNGGTLEN). Residues 61–63 (RGD) carry the Cell attachment site motif. Residues 74–90 (EDWEMEEDQGEEEEEEA) are compositionally biased toward acidic residues. The region spanning 183–320 (LGHKCFLLSR…CQRRLYYVCE (138 aa)) is the C-type lectin domain. Disulfide bonds link cysteine 204–cysteine 319 and cysteine 296–cysteine 311.

O-glycosylated. Probably sulfated on the O-glycans. As to expression, expressed in skeletal tissues including bone marrow, chondrocytes, primary ossification center-associated cells, the perichondrium and periosteum. Lower levels of expression were detected in spleen, thymus, appendix and fetal liver.

It is found in the cytoplasm. The protein resides in the secreted. Functionally, promotes osteogenesis by stimulating the differentiation of mesenchymal progenitors into mature osteoblasts. Important for repair and maintenance of adult bone. The chain is C-type lectin domain family 11 member A (CLEC11A) from Homo sapiens (Human).